Here is an 803-residue protein sequence, read N- to C-terminus: Nucleoporin nup82 (803 aa).

As to quaternary structure, component of the nuclear pore complex (NPC). NPC constitutes the exclusive means of nucleocytoplasmic transport. NPCs allow the passive diffusion of ions and small molecules and the active, nuclear transport receptor-mediated bidirectional transport of macromolecules such as proteins, RNAs, ribonucleoparticles (RNPs), and ribosomal subunits across the nuclear envelope.

It localises to the nucleus. It is found in the nuclear pore complex. Its subcellular location is the nucleus membrane. Functionally, functions as a component of the nuclear pore complex (NPC). NPC components, collectively referred to as nucleoporins (NUPs), can play the role of both NPC structural components and of docking or interaction partners for transiently associated nuclear transport factors. The chain is Nucleoporin nup82 from Schizosaccharomyces pombe (strain 972 / ATCC 24843) (Fission yeast).